The sequence spans 1520 residues: Integrator complex subunit 3 homolog (1520 aa).

Disordered stretches follow at residues 1 to 23 (MMNQQQQQQQPPTTSPTQQQQLT), 523 to 671 (QLHS…NSRV), 689 to 801 (VISQ…SPST), 813 to 922 (DEPP…QNIK), 1116 to 1177 (FSNS…NITN), and 1489 to 1520 (QSSNIKNDNNPTLSKHQNSDDDSNPKKRFRKE). Low complexity-rich tracts occupy residues 527 to 549 (QQQQLQQQQLQQPQQPQQQQQPP) and 557 to 595 (QPINKQLPLQMSPQQQSQQQLQQQQLQQQLQQQQQQQQP). The segment covering 596-612 (PQQPPPQQQPQQQPPQQ) has biased composition (pro residues). The span at 613 to 625 (QPQQQPQQQQPQL) shows a compositional bias: low complexity. Over residues 626-639 (NISTGNLPNIQQPM) the composition is skewed to polar residues. Low complexity-rich tracts occupy residues 642-669 (SPPLSSNTLVSPTSSSSPTSSNLPTNNS), 694-717 (PQSQQTPSLHSSSQSVLQQKSPPL), and 725-735 (QQQPSQQLPSQ). Residues 736–752 (IVKNSPPNLSMTNENIS) show a composition bias toward polar residues. Low complexity predominate over residues 768–789 (SPLINSSNSNITTPNPDSQSQI). Positions 819–828 (SKSSPTQSNI) are enriched in polar residues. Residues 837-882 (PPQTTISSSSPLLQPQTQPQPQTQPQPQTLQQSTTPSLSSSSTPTI) are compositionally biased toward low complexity. The segment covering 898-918 (QPPPPPPSSQPLQPPPPPPPS) has biased composition (pro residues). 2 stretches are compositionally biased toward low complexity: residues 1116–1130 (FSNSDDNESTNNNNN) and 1137–1177 (QQQQ…NITN). Polar residues predominate over residues 1489-1504 (QSSNIKNDNNPTLSKH).

The protein belongs to the Integrator subunit 3 family. In terms of assembly, component of the Integrator complex. The core complex associates with protein phosphatase 2A subunits, to form the Integrator-PP2A (INTAC) complex. Component of the SOSS complex.

The protein resides in the nucleus. It is found in the cytoplasm. Its function is as follows. Component of the integrator complex, a multiprotein complex that terminates RNA polymerase II (Pol II) transcription in the promoter-proximal region of genes. The integrator complex provides a quality checkpoint during transcription elongation by driving premature transcription termination of transcripts that are unfavorably configured for transcriptional elongation: the complex terminates transcription by (1) catalyzing dephosphorylation of the C-terminal domain (CTD) of Pol II subunit polr2a, (2) degrading the exiting nascent RNA transcript via endonuclease activity and (3) promoting the release of Pol II from bound DNA. The integrator complex is also involved in terminating the synthesis of non-coding Pol II transcripts, such as enhancer RNAs (eRNAs), small nuclear RNAs (snRNAs), telomerase RNAs and long non-coding RNAs (lncRNAs). Component of the SOSS complex, a multiprotein complex that functions downstream of the MRN complex to promote DNA repair and G2/M checkpoint. The SOSS complex associates with single-stranded DNA at DNA lesions and influences diverse endpoints in the cellular DNA damage response including cell-cycle checkpoint activation, recombinational repair and maintenance of genomic stability. The SOSS complex is required for efficient homologous recombination-dependent repair of double-strand breaks (DSBs) and ATM-dependent signaling pathways. In the SOSS complex, it is required for the assembly of the complex and for stabilization of the complex at DNA damage sites. In Dictyostelium discoideum (Social amoeba), this protein is Integrator complex subunit 3 homolog (ints3).